A 150-amino-acid polypeptide reads, in one-letter code: Deoxyuridine 5'-triphosphate nucleotidohydrolase (150 aa).

Residues 69 to 71 (RSG), N82, 86 to 88 (LID), and K96 each bind substrate.

The protein belongs to the dUTPase family. Mg(2+) serves as cofactor.

It carries out the reaction dUTP + H2O = dUMP + diphosphate + H(+). Its pathway is pyrimidine metabolism; dUMP biosynthesis; dUMP from dCTP (dUTP route): step 2/2. In terms of biological role, this enzyme is involved in nucleotide metabolism: it produces dUMP, the immediate precursor of thymidine nucleotides and it decreases the intracellular concentration of dUTP so that uracil cannot be incorporated into DNA. This is Deoxyuridine 5'-triphosphate nucleotidohydrolase from Neisseria gonorrhoeae (strain NCCP11945).